Reading from the N-terminus, the 36-residue chain is Photosystem I reaction center subunit VIII (36 aa).

The chain crosses the membrane as a helical span at residues 8 to 28; sequence SILVPLVGLVFPAIAMASLFL.

This sequence belongs to the PsaI family.

The protein resides in the plastid. Its subcellular location is the chloroplast thylakoid membrane. In terms of biological role, may help in the organization of the PsaL subunit. The protein is Photosystem I reaction center subunit VIII of Vitis vinifera (Grape).